The following is a 469-amino-acid chain: 3-isopropylmalate dehydratase large subunit (469 aa).

[4Fe-4S] cluster-binding residues include Cys-347, Cys-407, and Cys-410.

The protein belongs to the aconitase/IPM isomerase family. LeuC type 1 subfamily. Heterodimer of LeuC and LeuD. Requires [4Fe-4S] cluster as cofactor.

The enzyme catalyses (2R,3S)-3-isopropylmalate = (2S)-2-isopropylmalate. It functions in the pathway amino-acid biosynthesis; L-leucine biosynthesis; L-leucine from 3-methyl-2-oxobutanoate: step 2/4. Catalyzes the isomerization between 2-isopropylmalate and 3-isopropylmalate, via the formation of 2-isopropylmaleate. The polypeptide is 3-isopropylmalate dehydratase large subunit (Proteus mirabilis (strain HI4320)).